The following is a 340-amino-acid chain: MTQLSPVAVSMGDPAGIGPEIILKAWQSWRRRNGVPPLIALGDIDAFTATAQALGLPAPCPLPTPTREAAETLDGLPVFDVGVKIAAPVRPGQPDTANAACTKAAIETGVRLALDGQVSALVTAPIAKSVMYEAGFAFPGHTEFLAELCADHPVDGPKGPAMMLAGGGLRVVLVTIHEPLVRALSLITPQRVEATARITDAALRRDFGIARPRLALAGLNPHAGEGGALGDEEIDILDPLAARLRADGIDITDAQPPDTLFHAEARAGYDAAICLYHDQGLIPVKTLDFHGGVNITLGLPIVRTSPDHGTAFNIAGQGVARPDSLLAALEQAVKIAECRA.

Substrate is bound by residues His-141 and Thr-142. Residues His-177, His-222, and His-277 each coordinate a divalent metal cation. Substrate-binding residues include Lys-285, Asn-294, and Arg-303.

This sequence belongs to the PdxA family. Homodimer. It depends on Zn(2+) as a cofactor. Mg(2+) serves as cofactor. Co(2+) is required as a cofactor.

It localises to the cytoplasm. It carries out the reaction 4-(phosphooxy)-L-threonine + NAD(+) = 3-amino-2-oxopropyl phosphate + CO2 + NADH. It functions in the pathway cofactor biosynthesis; pyridoxine 5'-phosphate biosynthesis; pyridoxine 5'-phosphate from D-erythrose 4-phosphate: step 4/5. Catalyzes the NAD(P)-dependent oxidation of 4-(phosphooxy)-L-threonine (HTP) into 2-amino-3-oxo-4-(phosphooxy)butyric acid which spontaneously decarboxylates to form 3-amino-2-oxopropyl phosphate (AHAP). In Maricaulis maris (strain MCS10) (Caulobacter maris), this protein is 4-hydroxythreonine-4-phosphate dehydrogenase.